Reading from the N-terminus, the 531-residue chain is ATP synthase subunit beta (531 aa).

Residues 1–48 (MVKAVTSSKETAKVEKKKSAPRSGVKKAVSKSQAGVKDSSSPVHKSSK) form a disordered region. A compositionally biased stretch (basic residues) spans 19–29 (SAPRSGVKKAV). Polar residues predominate over residues 30–44 (SKSQAGVKDSSSPVH). 203–210 (GGAGVGKT) lines the ATP pocket.

This sequence belongs to the ATPase alpha/beta chains family. As to quaternary structure, F-type ATPases have 2 components, CF(1) - the catalytic core - and CF(0) - the membrane proton channel. CF(1) has five subunits: alpha(3), beta(3), gamma(1), delta(1), epsilon(1). CF(0) has three main subunits: a(1), b(2) and c(9-12). The alpha and beta chains form an alternating ring which encloses part of the gamma chain. CF(1) is attached to CF(0) by a central stalk formed by the gamma and epsilon chains, while a peripheral stalk is formed by the delta and b chains.

It is found in the cell inner membrane. It carries out the reaction ATP + H2O + 4 H(+)(in) = ADP + phosphate + 5 H(+)(out). Produces ATP from ADP in the presence of a proton gradient across the membrane. The catalytic sites are hosted primarily by the beta subunits. The protein is ATP synthase subunit beta of Bartonella henselae (strain ATCC 49882 / DSM 28221 / CCUG 30454 / Houston 1) (Rochalimaea henselae).